A 255-amino-acid chain; its full sequence is Acetylglutamate kinase (255 aa).

Substrate-binding positions include 40-41 (GG), Arg-62, and Asn-153.

Belongs to the acetylglutamate kinase family. ArgB subfamily.

Its subcellular location is the cytoplasm. It carries out the reaction N-acetyl-L-glutamate + ATP = N-acetyl-L-glutamyl 5-phosphate + ADP. It functions in the pathway amino-acid biosynthesis; L-arginine biosynthesis; N(2)-acetyl-L-ornithine from L-glutamate: step 2/4. Catalyzes the ATP-dependent phosphorylation of N-acetyl-L-glutamate. This Bacillus anthracis (strain A0248) protein is Acetylglutamate kinase.